The chain runs to 100 residues: Defensin-like protein 316 (100 aa).

Positions 1–18 are cleaved as a signal peptide; the sequence is MASHIICYIFCIIKLSCA. Intrachain disulfides connect Cys21/Cys84, Cys43/Cys64, and Cys53/Cys76.

It belongs to the DEFL family.

The protein resides in the secreted. The protein is Defensin-like protein 316 of Arabidopsis thaliana (Mouse-ear cress).